The following is a 92-amino-acid chain: UPF0223 protein SSP1692 (92 aa).

The protein belongs to the UPF0223 family.

The chain is UPF0223 protein SSP1692 from Staphylococcus saprophyticus subsp. saprophyticus (strain ATCC 15305 / DSM 20229 / NCIMB 8711 / NCTC 7292 / S-41).